Consider the following 658-residue polypeptide: UvrABC system protein B (658 aa).

Residues 25–416 (KSLKNNNHYQ…QKNVAEQIIR (392 aa)) form the Helicase ATP-binding domain. 38–45 (GVTGSGKT) lines the ATP pocket. The short motif at 91-114 (HFDYYQPESYIPRRDLFIEKDSSI) is the Beta-hairpin element. Positions 433–607 (QVQDLFDEIK…ELKLRDDEIK (175 aa)) constitute a Helicase C-terminal domain. In terms of domain architecture, UVR spans 623 to 658 (EKIIKELDKKMRERAKNLDFEEAMRLRDEIAQLRTL).

The protein belongs to the UvrB family. In terms of assembly, forms a heterotetramer with UvrA during the search for lesions. Interacts with UvrC in an incision complex.

Its subcellular location is the cytoplasm. The UvrABC repair system catalyzes the recognition and processing of DNA lesions. A damage recognition complex composed of 2 UvrA and 2 UvrB subunits scans DNA for abnormalities. Upon binding of the UvrA(2)B(2) complex to a putative damaged site, the DNA wraps around one UvrB monomer. DNA wrap is dependent on ATP binding by UvrB and probably causes local melting of the DNA helix, facilitating insertion of UvrB beta-hairpin between the DNA strands. Then UvrB probes one DNA strand for the presence of a lesion. If a lesion is found the UvrA subunits dissociate and the UvrB-DNA preincision complex is formed. This complex is subsequently bound by UvrC and the second UvrB is released. If no lesion is found, the DNA wraps around the other UvrB subunit that will check the other stand for damage. This Helicobacter pylori (strain J99 / ATCC 700824) (Campylobacter pylori J99) protein is UvrABC system protein B.